The chain runs to 1561 residues: Rho GTPase-activating protein 190 (1561 aa).

FF domains are found at residues 252 to 320 (YQES…HMKK), 365 to 419 (YLQN…YLNS), 426 to 480 (KIGW…HQDD), and 482 to 547 (IEKS…HLRF). The pG1 pseudoGTPase domain maps to 592–765 (SGSDRTLNLL…EPYPSNHTDL (174 aa)). The region spanning 766–926 (RILCCIFCGD…LKTAWDNKYE (161 aa)) is the pG2 pseudoGTPase domain. A phosphoserine mark is found at Ser973, Ser975, Ser985, Ser988, and Ser996. Residues 1054 to 1074 (KIRPKGPSQTLKVGEAPSRNC) are disordered. One can recognise a Rho-GAP domain in the interval 1349 to 1552 (AQFGKLMITS…TMIDQFPYLF (204 aa)).

Negatively regulated by integrin, bsk and Src/Src64B. Functionally, GTPase-activating protein (GAP) for RhoA/Rho1 that plays an essential role in the stability of dorsal branches of mushroom body (MB) neurons. The MB neurons are the center for olfactory learning and memory. Acts by converting RhoA/Rho1 to an inactive GDP-bound state, leading to repress the RhoA/Rho1-Drok-MRLC signaling pathway thereby maintaining axon branch stability. The chain is Rho GTPase-activating protein 190 (RhoGAPp190) from Drosophila melanogaster (Fruit fly).